The chain runs to 1054 residues: DNA-directed RNA polymerase subunit beta' (1054 aa).

Mg(2+) is bound by residues Asp383, Asp385, and Asp387. Zn(2+) is bound by residues Cys752, Cys826, Cys833, and Cys836.

It belongs to the RNA polymerase beta' chain family. The RNAP catalytic core consists of 2 alpha, 1 beta, 1 beta' and 1 omega subunit. When a sigma factor is associated with the core the holoenzyme is formed, which can initiate transcription. Requires Mg(2+) as cofactor. The cofactor is Zn(2+).

It carries out the reaction RNA(n) + a ribonucleoside 5'-triphosphate = RNA(n+1) + diphosphate. Its function is as follows. DNA-dependent RNA polymerase catalyzes the transcription of DNA into RNA using the four ribonucleoside triphosphates as substrates. The protein is DNA-directed RNA polymerase subunit beta' of Weissella paramesenteroides (Leuconostoc paramesenteroides).